We begin with the raw amino-acid sequence, 256 residues long: Glutamate racemase (256 aa).

Substrate is bound by residues aspartate 12–serine 13 and tyrosine 44–glycine 45. Cysteine 75 serves as the catalytic Proton donor/acceptor. A substrate-binding site is contributed by asparagine 76 to threonine 77. The active-site Proton donor/acceptor is the cysteine 186. Threonine 187–histidine 188 lines the substrate pocket.

The protein belongs to the aspartate/glutamate racemases family.

It carries out the reaction L-glutamate = D-glutamate. It functions in the pathway cell wall biogenesis; peptidoglycan biosynthesis. Provides the (R)-glutamate required for cell wall biosynthesis. This chain is Glutamate racemase, found in Clostridium acetobutylicum (strain ATCC 824 / DSM 792 / JCM 1419 / IAM 19013 / LMG 5710 / NBRC 13948 / NRRL B-527 / VKM B-1787 / 2291 / W).